A 478-amino-acid polypeptide reads, in one-letter code: RNA-binding protein 42 (478 aa).

The segment covering 1-20 (MASAMAGAGPAPGLPVAGGP) has biased composition (low complexity). Residues 1–33 (MASAMAGAGPAPGLPVAGGPVVPGPGVGIPGKS) are disordered. Alanine 2 carries the post-translational modification N-acetylalanine. Serine 133 carries the post-translational modification Phosphoserine. Asymmetric dimethylarginine is present on residues arginine 151, arginine 156, arginine 166, and arginine 179. Disordered regions lie at residues 171–207 (LSSAAGGPRPMALRPPHQALVGPPLPGPPGPPMMLPP) and 317–354 (SLRPRPRPPRPEPPPGLMALEVPEPLGEDKKKGKPEKL). Over residues 193–205 (PPLPGPPGPPMML) the composition is skewed to pro residues. A necessary for interaction with HNRNPK region spans residues 234 to 478 (ELGLGLGLGL…QKEKKKLGLR (245 aa)). Residues 343–354 (GEDKKKGKPEKL) are compositionally biased toward basic and acidic residues. The region spanning 379-457 (FRIFCGDLGN…RPIKLRKSMW (79 aa)) is the RRM domain.

Belongs to the RRM RBM42 family. As to quaternary structure, interacts with HNRNPK. As to expression, expressed in cell lines (at protein level). Expressed in heart, brain, spleen, lung, liver, skeletal muscle, kidney and testis.

It is found in the nucleus. It localises to the cytoplasm. Binds (via the RRM domain) to the 3'-untranslated region (UTR) of CDKN1A mRNA. The polypeptide is RNA-binding protein 42 (Rbm42) (Mus musculus (Mouse)).